The primary structure comprises 344 residues: 17-beta-hydroxysteroid dehydrogenase type 1 (344 aa).

3-32 (PTVVLITGCSSGIGMHLAVRLASDRSQSFK) contributes to the NAD(+) binding site. NADP(+) is bound by residues 10 to 38 (GCSS…ATLR) and Asp66. Position 135 is a phosphoserine (Ser135). A substrate-binding site is contributed by Ser143. Tyr156 (proton acceptor) is an active-site residue. Lys160 lines the NADP(+) pocket.

The protein belongs to the short-chain dehydrogenases/reductases (SDR) family. Homodimer. Exists predominantly as a homodimer but also exits as monomer.

The protein resides in the cytoplasm. It carries out the reaction 17beta-estradiol + NAD(+) = estrone + NADH + H(+). The catalysed reaction is 17beta-estradiol + NADP(+) = estrone + NADPH + H(+). The enzyme catalyses testosterone + NADP(+) = androst-4-ene-3,17-dione + NADPH + H(+). It functions in the pathway steroid biosynthesis; estrogen biosynthesis. Functionally, favors the reduction of estrogens and androgens. Converts estrone (E1) to a more potent estrogen, 17beta-estradiol (E2). Also has 20-alpha-HSD activity. Uses preferentially NADH. The polypeptide is 17-beta-hydroxysteroid dehydrogenase type 1 (Mus musculus (Mouse)).